A 98-amino-acid polypeptide reads, in one-letter code: NADH-ubiquinone oxidoreductase chain 4L (98 aa).

3 consecutive transmembrane segments (helical) span residues 1 to 21, 29 to 49, and 61 to 81; these read MSLIHINIFLAFTVSLMGLLM, SLLCLEGMMLSLFIMATMMVL, and IILLVFAACEAALGLSLLVMI.

It belongs to the complex I subunit 4L family. In terms of assembly, core subunit of respiratory chain NADH dehydrogenase (Complex I) which is composed of 45 different subunits.

The protein localises to the mitochondrion inner membrane. It catalyses the reaction a ubiquinone + NADH + 5 H(+)(in) = a ubiquinol + NAD(+) + 4 H(+)(out). Functionally, core subunit of the mitochondrial membrane respiratory chain NADH dehydrogenase (Complex I) which catalyzes electron transfer from NADH through the respiratory chain, using ubiquinone as an electron acceptor. Part of the enzyme membrane arm which is embedded in the lipid bilayer and involved in proton translocation. In Rhinoceros unicornis (Greater Indian rhinoceros), this protein is NADH-ubiquinone oxidoreductase chain 4L (MT-ND4L).